The primary structure comprises 549 residues: Glucose-6-phosphate isomerase (549 aa).

Glutamate 355 functions as the Proton donor in the catalytic mechanism. Catalysis depends on residues histidine 386 and lysine 514.

This sequence belongs to the GPI family.

The protein localises to the cytoplasm. The catalysed reaction is alpha-D-glucose 6-phosphate = beta-D-fructose 6-phosphate. The protein operates within carbohydrate biosynthesis; gluconeogenesis. It functions in the pathway carbohydrate degradation; glycolysis; D-glyceraldehyde 3-phosphate and glycerone phosphate from D-glucose: step 2/4. In terms of biological role, catalyzes the reversible isomerization of glucose-6-phosphate to fructose-6-phosphate. In Buchnera aphidicola subsp. Acyrthosiphon pisum (strain 5A), this protein is Glucose-6-phosphate isomerase.